Reading from the N-terminus, the 193-residue chain is Potassium-transporting ATPase KdpC subunit (193 aa).

The helical transmembrane segment at 14–34 threads the bilayer; sequence ITFTFLVLCGLVYPLIVTGIA.

Belongs to the KdpC family. As to quaternary structure, the system is composed of three essential subunits: KdpA, KdpB and KdpC.

The protein localises to the cell membrane. Part of the high-affinity ATP-driven potassium transport (or Kdp) system, which catalyzes the hydrolysis of ATP coupled with the electrogenic transport of potassium into the cytoplasm. This subunit acts as a catalytic chaperone that increases the ATP-binding affinity of the ATP-hydrolyzing subunit KdpB by the formation of a transient KdpB/KdpC/ATP ternary complex. In Bacillus cereus (strain AH820), this protein is Potassium-transporting ATPase KdpC subunit.